The following is a 458-amino-acid chain: 5-hydroxytryptamine receptor 2C (458 aa).

An N-terminal signal peptide occupies residues methionine 1–alanine 32. Residues isoleucine 33 to tryptophan 55 lie on the Extracellular side of the membrane. Residues proline 56–methionine 80 form a helical membrane-spanning segment. Topologically, residues glutamate 81–asparagine 86 are cytoplasmic. A helical transmembrane segment spans residues alanine 87–leucine 111. The Extracellular portion of the chain corresponds to leucine 112–proline 128. Cysteine 127 and cysteine 207 are oxidised to a cystine. A helical transmembrane segment spans residues valine 129 to aspartate 151. Threonine 139 serves as a coordination point for ergotamine. A DRY motif; important for ligand-induced conformation changes motif is present at residues aspartate 151–tyrosine 153. At arginine 152–serine 167 the chain is on the cytoplasmic side. The chain crosses the membrane as a helical span at residues arginine 168–isoleucine 189. Topologically, residues proline 190–asparagine 213 are extracellular. Leucine 209 contributes to the ergotamine binding site. Residues phenylalanine 214–leucine 236 form a helical membrane-spanning segment. Residues threonine 237 to lysine 311 lie on the Cytoplasmic side of the membrane. The tract at residues glutamate 274 to glutamine 301 is disordered. Over residues arginine 287–arginine 297 the composition is skewed to basic residues. Residues valine 312–leucine 336 traverse the membrane as a helical segment. A disulfide bridge connects residues cysteine 337 and cysteine 341. The Extracellular portion of the chain corresponds to cysteine 337–glutamate 347. A helical transmembrane segment spans residues lysine 348–leucine 370. The short motif at asparagine 364 to tyrosine 368 is the NPxxY motif; important for ligand-induced conformation changes and signaling element. Residues phenylalanine 371 to valine 458 are Cytoplasmic-facing. The PDZ-binding motif lies at serine 456–valine 458.

The protein belongs to the G-protein coupled receptor 1 family. Interacts with MPDZ. Interacts with ARRB2. Interacts with MPP3; this interaction stabilizes the receptor at the plasma membrane and prevents the desensitization of the HTR2C receptor-mediated calcium response.

Its subcellular location is the cell membrane. Its function is as follows. G-protein coupled receptor for 5-hydroxytryptamine (serotonin). Also functions as a receptor for various drugs and psychoactive substances, including ergot alkaloid derivatives, 1-2,5,-dimethoxy-4-iodophenyl-2-aminopropane (DOI) and lysergic acid diethylamide (LSD). Ligand binding causes a conformation change that triggers signaling via guanine nucleotide-binding proteins (G proteins) and modulates the activity of downstream effectors. HTR2C is coupled to G(q)/G(11) G alpha proteins and activates phospholipase C-beta, releasing diacylglycerol (DAG) and inositol 1,4,5-trisphosphate (IP3) second messengers that modulate the activity of phosphatidylinositol 3-kinase and promote the release of Ca(2+) ions from intracellular stores, respectively. Beta-arrestin family members inhibit signaling via G proteins and mediate activation of alternative signaling pathways. Regulates neuronal activity via the activation of short transient receptor potential calcium channels in the brain, and thereby modulates the activation of pro-opiomelanocortin neurons and the release of CRH that then regulates the release of corticosterone. Plays a role in the regulation of appetite and eating behavior, responses to anxiogenic stimuli and stress. Plays a role in insulin sensitivity and glucose homeostasis. In Pan troglodytes (Chimpanzee), this protein is 5-hydroxytryptamine receptor 2C.